A 71-amino-acid polypeptide reads, in one-letter code: MAILRAKEIRGMSDKELDKQLKDLRNDLLKQHAISATGGAPENPGRIRELRRTIARILTIKQEKKQKEMKR.

Belongs to the universal ribosomal protein uL29 family.

This Methanocella arvoryzae (strain DSM 22066 / NBRC 105507 / MRE50) protein is Large ribosomal subunit protein uL29.